A 240-amino-acid polypeptide reads, in one-letter code: Ribosomal RNA small subunit methyltransferase G (240 aa).

Residues Gly-79, Phe-84, 130 to 131, and Arg-149 contribute to the S-adenosyl-L-methionine site; that span reads AE.

The protein belongs to the methyltransferase superfamily. RNA methyltransferase RsmG family.

The protein resides in the cytoplasm. Functionally, specifically methylates the N7 position of a guanine in 16S rRNA. This is Ribosomal RNA small subunit methyltransferase G from Desulforamulus reducens (strain ATCC BAA-1160 / DSM 100696 / MI-1) (Desulfotomaculum reducens).